The following is a 201-amino-acid chain: Small ribosomal subunit protein uS4c (201 aa).

The interval 20–43 (GLTSKRPRAGSDLRNQSRSGKRSQ) is disordered. One can recognise an S4 RNA-binding domain in the interval 89–149 (MRLDNILFRL…NEQKSRALIQ (61 aa)).

It belongs to the universal ribosomal protein uS4 family. Part of the 30S ribosomal subunit. Contacts protein S5. The interaction surface between S4 and S5 is involved in control of translational fidelity.

The protein localises to the plastid. It is found in the chloroplast. One of the primary rRNA binding proteins, it binds directly to 16S rRNA where it nucleates assembly of the body of the 30S subunit. Its function is as follows. With S5 and S12 plays an important role in translational accuracy. The chain is Small ribosomal subunit protein uS4c (rps4) from Vitis vinifera (Grape).